A 277-amino-acid polypeptide reads, in one-letter code: RNA-binding protein pno-1 (277 aa).

Disordered regions lie at residues 1 to 52 (MATS…KLVK) and 72 to 100 (DEDA…GESR). Over residues 8–27 (FDDELPMEEGMPELLDDEDV) the composition is skewed to acidic residues. Over residues 30–40 (TLPSLLEQNLD) the composition is skewed to polar residues. Residues 72 to 81 (DEDATADTAD) are compositionally biased toward acidic residues. The KH domain maps to 198-250 (GDHVSRAIGRIAGKDGRTKLVIENTTKTRIVVANTKIHILGAYQNLKLARNAV).

It belongs to the PNO1 family. As to quaternary structure, part of the small subunit (SSU) processome, composed of more than 70 proteins and the RNA chaperone small nucleolar RNA (snoRNA) U3.

It is found in the nucleus. It localises to the nucleolus. Part of the small subunit (SSU) processome, first precursor of the small eukaryotic ribosomal subunit. During the assembly of the SSU processome in the nucleolus, many ribosome biogenesis factors, an RNA chaperone and ribosomal proteins associate with the nascent pre-rRNA and work in concert to generate RNA folding, modifications, rearrangements and cleavage as well as targeted degradation of pre-ribosomal RNA by the RNA exosome. Positively regulates dimethylation of two adjacent adenosines in the loop of a conserved hairpin near the 3'-end of 18S rRNA. This is RNA-binding protein pno-1 from Caenorhabditis elegans.